The primary structure comprises 454 residues: Tol-Pal system protein TolB (454 aa).

The first 30 residues, 1 to 30 (MNDARSITRRRFMTLTGSGLAMLGGGHAFA), serve as a signal peptide directing secretion.

It belongs to the TolB family. In terms of assembly, the Tol-Pal system is composed of five core proteins: the inner membrane proteins TolA, TolQ and TolR, the periplasmic protein TolB and the outer membrane protein Pal. They form a network linking the inner and outer membranes and the peptidoglycan layer.

The protein resides in the periplasm. In terms of biological role, part of the Tol-Pal system, which plays a role in outer membrane invagination during cell division and is important for maintaining outer membrane integrity. In Bradyrhizobium diazoefficiens (strain JCM 10833 / BCRC 13528 / IAM 13628 / NBRC 14792 / USDA 110), this protein is Tol-Pal system protein TolB.